We begin with the raw amino-acid sequence, 176 residues long: MVCLVSRTGRQSQRYNKGRRQVVGCIPYRLKISSDGTISDEFEVLVISSQKGHALMFPKGGWELDESVEEAASRESLEEAGVVGNVERQLGKWDFLSKSKGTFYEGFMFPMLVKEELELWPEQHLRQRIWMKVDEARDACRDWWMKEALDVLVQRLSLLSLKPMEEDENLPLISIY.

The transit peptide at 1 to 21 (MVCLVSRTGRQSQRYNKGRRQ) directs the protein to the mitochondrion. The region spanning 22-153 (VVGCIPYRLK…WMKEALDVLV (132 aa)) is the Nudix hydrolase domain. The Nudix box signature appears at 60 to 81 (GGWELDESVEEAASRESLEEAG). Positions 75 and 79 each coordinate Mg(2+).

The protein belongs to the Nudix hydrolase family. Mg(2+) serves as cofactor. It depends on Mn(2+) as a cofactor. In terms of tissue distribution, expressed in roots, stems and inflorescences.

It localises to the mitochondrion. Its function is as follows. Probably mediates the hydrolysis of some nucleoside diphosphate derivatives. This is Nudix hydrolase 18, mitochondrial (NUDT18) from Arabidopsis thaliana (Mouse-ear cress).